The following is a 314-amino-acid chain: 2,3-dihydroxyphenylpropionate/2,3-dihydroxicinnamic acid 1,2-dioxygenase (314 aa).

His115 acts as the Proton donor in catalysis. The active-site Proton acceptor is His179.

Belongs to the LigB/MhpB extradiol dioxygenase family. In terms of assembly, homotetramer. Fe(2+) is required as a cofactor.

It catalyses the reaction 3-(2,3-dihydroxyphenyl)propanoate + O2 = (2Z,4E)-2-hydroxy-6-oxonona-2,4-dienedioate + H(+). The catalysed reaction is (2E)-3-(2,3-dihydroxyphenyl)prop-2-enoate + O2 = (2Z,4E,7E)-2-hydroxy-6-oxonona-2,4,7-trienedioate + H(+). Its pathway is aromatic compound metabolism; 3-phenylpropanoate degradation. Its function is as follows. Catalyzes the non-heme iron(II)-dependent oxidative cleavage of 2,3-dihydroxyphenylpropionic acid and 2,3-dihydroxicinnamic acid into 2-hydroxy-6-ketononadienedioate and 2-hydroxy-6-ketononatrienedioate, respectively. The sequence is that of 2,3-dihydroxyphenylpropionate/2,3-dihydroxicinnamic acid 1,2-dioxygenase from Escherichia coli O139:H28 (strain E24377A / ETEC).